A 315-amino-acid polypeptide reads, in one-letter code: Aspartate carbamoyltransferase catalytic subunit (315 aa).

Arginine 64 and threonine 65 together coordinate carbamoyl phosphate. Lysine 92 serves as a coordination point for L-aspartate. The carbamoyl phosphate site is built by arginine 114, histidine 142, and glutamine 145. Arginine 175 and arginine 229 together coordinate L-aspartate. Carbamoyl phosphate-binding residues include glycine 270 and proline 271.

It belongs to the aspartate/ornithine carbamoyltransferase superfamily. ATCase family. Heterododecamer (2C3:3R2) of six catalytic PyrB chains organized as two trimers (C3), and six regulatory PyrI chains organized as three dimers (R2).

It catalyses the reaction carbamoyl phosphate + L-aspartate = N-carbamoyl-L-aspartate + phosphate + H(+). It participates in pyrimidine metabolism; UMP biosynthesis via de novo pathway; (S)-dihydroorotate from bicarbonate: step 2/3. In terms of biological role, catalyzes the condensation of carbamoyl phosphate and aspartate to form carbamoyl aspartate and inorganic phosphate, the committed step in the de novo pyrimidine nucleotide biosynthesis pathway. The polypeptide is Aspartate carbamoyltransferase catalytic subunit (Xanthobacter autotrophicus (strain ATCC BAA-1158 / Py2)).